The following is a 428-amino-acid chain: FAD-dependent monooxygenase kojA (428 aa).

Residues 52-60 (RLHKGPHYP) and 328-329 (SV) each bind FAD.

The protein belongs to the aromatic-ring hydroxylase family. The cofactor is FAD.

Its function is as follows. Probable FAD-dependent monooxygenase; part of the gene cluster that mediates the biosynthesis of 5-hydroxy-2-hydroxymethyl-1,4-pyrone, also know as kojic acid, a by-product in the fermentation process of malting rice that acts as a chelation agent. Glucose might be converted to kojic acid by a combination of dehydrogenase and dehydratase reactions involving kojA and probably additional enzymes. The protein is FAD-dependent monooxygenase kojA of Aspergillus flavus (strain ATCC 200026 / FGSC A1120 / IAM 13836 / NRRL 3357 / JCM 12722 / SRRC 167).